We begin with the raw amino-acid sequence, 332 residues long: Glycerol-3-phosphate dehydrogenase [NAD(P)+] (332 aa).

W11, R30, and K108 together coordinate NADPH. Sn-glycerol 3-phosphate contacts are provided by K108, G137, and S139. A141 contributes to the NADPH binding site. Sn-glycerol 3-phosphate-binding residues include K192, D245, S255, R256, and N257. The active-site Proton acceptor is K192. Residue R256 coordinates NADPH. V280 and E282 together coordinate NADPH.

Belongs to the NAD-dependent glycerol-3-phosphate dehydrogenase family.

It localises to the cytoplasm. The enzyme catalyses sn-glycerol 3-phosphate + NAD(+) = dihydroxyacetone phosphate + NADH + H(+). The catalysed reaction is sn-glycerol 3-phosphate + NADP(+) = dihydroxyacetone phosphate + NADPH + H(+). Its pathway is membrane lipid metabolism; glycerophospholipid metabolism. Its function is as follows. Catalyzes the reduction of the glycolytic intermediate dihydroxyacetone phosphate (DHAP) to sn-glycerol 3-phosphate (G3P), the key precursor for phospholipid synthesis. In Burkholderia ambifaria (strain MC40-6), this protein is Glycerol-3-phosphate dehydrogenase [NAD(P)+].